Here is a 238-residue protein sequence, read N- to C-terminus: ATP-dependent Clp protease ATP-binding subunit CLPT1, chloroplastic (238 aa).

The N-terminal 64 residues, 1 to 64, are a transit peptide targeting the chloroplast; the sequence is MASYTVSFIP…VPKLRCLTSA (64 aa). Positions 83-228 constitute a Clp R domain; the sequence is IPKWSARAIK…KEVEKSMNED (146 aa). Repeat stretches follow at residues 86 to 151 and 163 to 228; these read WSAR…LGKS and LTEP…MNED.

This sequence belongs to the ClpA/ClpB family. Monomer and homodimer. Binds to the CLP3-6 ring (P-ring). The dimers monomerize before association to the P-ring. Component of the chloroplastic Clp protease core complex which consist of at least 16 proteins: CLPP4 (3 copies), CLPP5 (3 copies), CLPR4 (2 copies), ClpP1 (1 copy), CLPP6 (1 copy), CLPR2 (1 copy), CLPT1 (1 copy), CLPT2 (1 copy) and 3 copies of CLPP3 and/or CLPR1 and/or CLPR3. Interacts with CLPC2 and CLPD. Interacts with CPN21. No interactions with CLPS1.

The protein localises to the plastid. It is found in the chloroplast. Its function is as follows. Accessory protein regulating the assembly of the plastidial Clp protease system. CLPT1 first binds to the heptameric P-ring containing the CLP3-6 subunits followed by CLPT2, and only then does the P-ring combine with the R-ring composed of the clpP1 and CLPR1-4 subunits. Once the core complex is fully assembled, it then associates to the CLPC chaperone partner to form the functional protease. CLPT1 and CLPT2 are partially redundant. This Arabidopsis thaliana (Mouse-ear cress) protein is ATP-dependent Clp protease ATP-binding subunit CLPT1, chloroplastic.